Here is a 412-residue protein sequence, read N- to C-terminus: uncharacterized protein (412 aa).

Positions 20-199 constitute a UmuC domain; it reads FFYFDFDAFF…LPIVELPGIG (180 aa).

This sequence belongs to the DNA polymerase type-Y family.

This is an uncharacterized protein from Mycoplasma pneumoniae (strain ATCC 29342 / M129 / Subtype 1) (Mycoplasmoides pneumoniae).